Consider the following 209-residue polypeptide: Thymidylate kinase (209 aa).

10–17 (GLDGAGKS) lines the ATP pocket.

The protein belongs to the thymidylate kinase family.

The catalysed reaction is dTMP + ATP = dTDP + ADP. Functionally, phosphorylation of dTMP to form dTDP in both de novo and salvage pathways of dTTP synthesis. The sequence is that of Thymidylate kinase from Francisella tularensis subsp. holarctica (strain FTNF002-00 / FTA).